We begin with the raw amino-acid sequence, 401 residues long: MALVSQARSLGKYFLLLDNLLVVLGFFIVFPLISIRFVDQLGWAAVLVGLALGLRQLVQQGLGIFGGAIADRFGAKPMIVTGMLMRAAGFALMAMADEPWILWLACALSGLGGTLFDPPRTALVIKLTRPHERGRFYSLLMMQDSAGAVIGALIGSWLLQYDFHFVCWTGAVIFILAAGWNVWLLPAYRISTVRAPMKEGLMRVLRDRRFVTYVLTLTGYYMLSVQVMLMLPIVVNEIAGSPAAVKWMYAIEAALSLTLLYPIARWSEKRFRLEQRLMFGLLIMTLSLFPVGLITHLQTLFMFICFFYMGSIIAEPARETLSASLADSRARGSYMGFSRLGLALGGALGYTGGGWMYDTGRTLEMPELPWFLLGVIGLITLVGLYWQFNQRRIESAMLSGS.

The next 11 membrane-spanning stretches (helical) occupy residues Tyr-13–Ile-33, Ser-34–Leu-54, Pro-99–Phe-116, Leu-139–Leu-159, Phe-165–Leu-185, Val-214–Val-234, Ala-243–Ile-263, Leu-277–Leu-297, Thr-299–Glu-319, Leu-340–Gly-360, and Leu-368–Phe-388.

It belongs to the major facilitator superfamily. DHA1 family. MdtH (TC 2.A.1.2.21) subfamily.

Its subcellular location is the cell inner membrane. This Yersinia enterocolitica serotype O:8 / biotype 1B (strain NCTC 13174 / 8081) protein is Multidrug resistance protein MdtH.